Consider the following 619-residue polypeptide: ESX-2 secretion system protein EccA2 (619 aa).

373–380 is an ATP binding site; the sequence is GPPGTGKT.

Belongs to the CbxX/CfxQ family. Part of the ESX-2 / type VII secretion system (T7SS), which is composed of cytosolic and membrane components. Residues 522-619 interact with an artificial EsxB-EsxA heterodimer from the adjacent ESX-1 locus.

It is found in the cytoplasm. In terms of biological role, shows ATPase activity. Could provide energy for export of ESX-2 substrates. This chain is ESX-2 secretion system protein EccA2 (eccA2), found in Mycobacterium tuberculosis (strain ATCC 25618 / H37Rv).